Here is a 281-residue protein sequence, read N- to C-terminus: Energy-coupling factor transporter ATP-binding protein EcfA1 (281 aa).

The region spanning 7–242 is the ABC transporter domain; sequence IAAEDITFRY…NQDLIKIGLD (236 aa). 42-49 is a binding site for ATP; that stretch reads GHNGSGKS.

The protein belongs to the ABC transporter superfamily. Energy-coupling factor EcfA family. Forms a stable energy-coupling factor (ECF) transporter complex composed of 2 membrane-embedded substrate-binding proteins (S component), 2 ATP-binding proteins (A component) and 2 transmembrane proteins (T component).

The protein resides in the cell membrane. Functionally, ATP-binding (A) component of a common energy-coupling factor (ECF) ABC-transporter complex. Unlike classic ABC transporters this ECF transporter provides the energy necessary to transport a number of different substrates. In Bacillus licheniformis (strain ATCC 14580 / DSM 13 / JCM 2505 / CCUG 7422 / NBRC 12200 / NCIMB 9375 / NCTC 10341 / NRRL NRS-1264 / Gibson 46), this protein is Energy-coupling factor transporter ATP-binding protein EcfA1.